Consider the following 452-residue polypeptide: Nebulette (452 aa).

The segment at Met-1–Ala-26 is disordered. A compositionally biased stretch (acidic residues) spans Glu-11 to Asn-23. 12 Nebulin repeats span residues Ser-29–Asp-63, Lys-64–Ser-98, Leu-101–Gly-135, Asp-138–Thr-172, Tyr-173–Lys-199, Lys-206–Lys-240, Leu-263–Gly-278, Leu-279–Gly-313, Ser-315–Lys-349, Ser-352–Lys-386, Gly-389–Lys-423, and Gly-426–Val-452.

In terms of assembly, interacts (via nebulin repeats 1-5) with DESM (via rod region). Interacts (via SH3 domain) with XIRP2.

It is found in the cytoplasm. Binds to actin and plays an important role in the assembly of the Z-disk. May functionally link sarcomeric actin to the desmin intermediate filaments in the heart muscle sarcomeres. Isoform 2 might play a role in the assembly of focal adhesion. The sequence is that of Nebulette (Nebl) from Mus musculus (Mouse).